We begin with the raw amino-acid sequence, 285 residues long: Homeobox protein Hox-A13b (285 aa).

Positions 219–278 form a DNA-binding region, homeobox; it reads GRKKRVPYTKVQLKELEREYAANKFITKDKRRRISAQTNLTERQVTIWFQNRRVKEKKVV.

The protein belongs to the Abd-B homeobox family.

The protein resides in the nucleus. Its function is as follows. Sequence-specific transcription factor which is part of a developmental regulatory system that provides cells with specific positional identities on the anterior-posterior axis. The polypeptide is Homeobox protein Hox-A13b (hoxa13b) (Takifugu rubripes (Japanese pufferfish)).